The chain runs to 61 residues: Large ribosomal subunit protein bL32 (61 aa).

Residues 1 to 16 (MAVPKRKTSPSRRGMR) show a composition bias toward basic residues. The tract at residues 1–44 (MAVPKRKTSPSRRGMRRSADALKAPTYVEDKDSGELRRPHHIDL) is disordered. The segment covering 28-44 (VEDKDSGELRRPHHIDL) has biased composition (basic and acidic residues).

It belongs to the bacterial ribosomal protein bL32 family.

The sequence is that of Large ribosomal subunit protein bL32 from Methylobacterium nodulans (strain LMG 21967 / CNCM I-2342 / ORS 2060).